A 459-amino-acid polypeptide reads, in one-letter code: Bifunctional protein GlmU (459 aa).

Positions 1-229 (MTNYAIILAA…FDESLGVNDR (229 aa)) are pyrophosphorylase. UDP-N-acetyl-alpha-D-glucosamine is bound by residues 8–11 (LAAG), Lys-22, Gln-72, and 77–78 (GT). Asp-102 contacts Mg(2+). UDP-N-acetyl-alpha-D-glucosamine contacts are provided by Gly-139, Glu-154, Asn-169, and Asn-227. Position 227 (Asn-227) interacts with Mg(2+). A linker region spans residues 230–250 (VALAKAEKVMRRRINHAHMVN). Residues 251 to 459 (GVTLTNPAST…KKKPHHPNNK (209 aa)) form an N-acetyltransferase region. UDP-N-acetyl-alpha-D-glucosamine contacts are provided by Arg-332 and Lys-350. His-362 functions as the Proton acceptor in the catalytic mechanism. Tyr-365 and Asn-376 together coordinate UDP-N-acetyl-alpha-D-glucosamine. Acetyl-CoA-binding positions include Ala-379, 385–386 (NY), Ser-404, Ala-422, and Arg-439.

This sequence in the N-terminal section; belongs to the N-acetylglucosamine-1-phosphate uridyltransferase family. It in the C-terminal section; belongs to the transferase hexapeptide repeat family. Homotrimer. Mg(2+) is required as a cofactor.

The protein localises to the cytoplasm. The enzyme catalyses alpha-D-glucosamine 1-phosphate + acetyl-CoA = N-acetyl-alpha-D-glucosamine 1-phosphate + CoA + H(+). It carries out the reaction N-acetyl-alpha-D-glucosamine 1-phosphate + UTP + H(+) = UDP-N-acetyl-alpha-D-glucosamine + diphosphate. The protein operates within nucleotide-sugar biosynthesis; UDP-N-acetyl-alpha-D-glucosamine biosynthesis; N-acetyl-alpha-D-glucosamine 1-phosphate from alpha-D-glucosamine 6-phosphate (route II): step 2/2. It functions in the pathway nucleotide-sugar biosynthesis; UDP-N-acetyl-alpha-D-glucosamine biosynthesis; UDP-N-acetyl-alpha-D-glucosamine from N-acetyl-alpha-D-glucosamine 1-phosphate: step 1/1. It participates in bacterial outer membrane biogenesis; LPS lipid A biosynthesis. Its function is as follows. Catalyzes the last two sequential reactions in the de novo biosynthetic pathway for UDP-N-acetylglucosamine (UDP-GlcNAc). The C-terminal domain catalyzes the transfer of acetyl group from acetyl coenzyme A to glucosamine-1-phosphate (GlcN-1-P) to produce N-acetylglucosamine-1-phosphate (GlcNAc-1-P), which is converted into UDP-GlcNAc by the transfer of uridine 5-monophosphate (from uridine 5-triphosphate), a reaction catalyzed by the N-terminal domain. The chain is Bifunctional protein GlmU from Streptococcus mutans serotype c (strain ATCC 700610 / UA159).